Consider the following 293-residue polypeptide: MELAQSSLNETTEISAGEEAVFDAGAHPLFSRMPSSVSFNKLRKRLLRQVRQALDDFGMLKGSKRWLVGVSGGKDSYSLLALLMDLKWRGLLPVELVACNLDQGQPNFPKHVLPDYLQSIGVRHRIEYRDTYSIVKEKVPAGATYCSLCSRLRRGNLYRIAREEGCDALVLGHHREDILETFFMNFFHGGRLASMPAKLLNDEGDLMVLRPLAYAAEDDIAKFAAAMEFPIIPCDLCGSQDGLERNAMKAMLSDIERRMPGRKDTMLRALGHVNASHLLDPKLFDFQSLSPEP.

The PP-loop motif signature appears at 71–76; sequence SGGKDS. [4Fe-4S] cluster-binding residues include C146, C149, and C237.

It belongs to the TtcA family. In terms of assembly, homodimer. The cofactor is Mg(2+). Requires [4Fe-4S] cluster as cofactor.

Its subcellular location is the cytoplasm. It catalyses the reaction cytidine(32) in tRNA + S-sulfanyl-L-cysteinyl-[cysteine desulfurase] + AH2 + ATP = 2-thiocytidine(32) in tRNA + L-cysteinyl-[cysteine desulfurase] + A + AMP + diphosphate + H(+). The protein operates within tRNA modification. Its function is as follows. Catalyzes the ATP-dependent 2-thiolation of cytidine in position 32 of tRNA, to form 2-thiocytidine (s(2)C32). The sulfur atoms are provided by the cysteine/cysteine desulfurase (IscS) system. This is tRNA-cytidine(32) 2-sulfurtransferase from Sinorhizobium medicae (strain WSM419) (Ensifer medicae).